The following is a 220-amino-acid chain: Iron-sulfur cluster repair protein YtfE (220 aa).

Belongs to the RIC family. YtfE subfamily. In terms of assembly, homodimer.

It localises to the cytoplasm. Functionally, di-iron-containing protein involved in the repair of iron-sulfur clusters damaged by oxidative and nitrosative stress conditions. The polypeptide is Iron-sulfur cluster repair protein YtfE (Salmonella schwarzengrund (strain CVM19633)).